The sequence spans 1377 residues: DNA-directed RNA polymerase subunit beta' (1377 aa).

Zn(2+) is bound by residues C60, C62, C75, and C78. The Mg(2+) site is built by D449, D451, and D453. The Zn(2+) site is built by C777, C851, C858, and C861.

This sequence belongs to the RNA polymerase beta' chain family. In terms of assembly, the RNAP catalytic core consists of 2 alpha, 1 beta, 1 beta' and 1 omega subunit. When a sigma factor is associated with the core the holoenzyme is formed, which can initiate transcription. Mg(2+) serves as cofactor. Zn(2+) is required as a cofactor.

The enzyme catalyses RNA(n) + a ribonucleoside 5'-triphosphate = RNA(n+1) + diphosphate. In terms of biological role, DNA-dependent RNA polymerase catalyzes the transcription of DNA into RNA using the four ribonucleoside triphosphates as substrates. This chain is DNA-directed RNA polymerase subunit beta', found in Borrelia hermsii (strain HS1 / DAH).